A 77-amino-acid chain; its full sequence is Large ribosomal subunit protein uL29 (77 aa).

It belongs to the universal ribosomal protein uL29 family.

The chain is Large ribosomal subunit protein uL29 from Corynebacterium jeikeium (strain K411).